The primary structure comprises 182 residues: Dirigent protein 5 (182 aa).

Residues 1–23 (MVGQMKSFLFLFVFLVLTKTVIS) form the signal peptide. C35 and C181 are disulfide-bonded. N-linked (GlcNAc...) asparagine glycans are attached at residues N54 and N118.

Belongs to the plant dirigent protein family. As to quaternary structure, homodimer. Confined to shoot meristem, vascular region of cotyledons and siliques abscission zone.

It is found in the secreted. The protein resides in the extracellular space. Its subcellular location is the apoplast. In terms of biological role, dirigent proteins impart stereoselectivity on the phenoxy radical-coupling reaction, yielding optically active lignans from two molecules of coniferyl alcohol in the biosynthesis of lignans, flavonolignans, and alkaloids and thus plays a central role in plant secondary metabolism. Enantiocomplementary dirigent protein that mediates the laccase-catalyzed enantioselective oxidative phenol coupling of (E)-coniferyl alcohol to (-)-pinoresinol. The protein is Dirigent protein 5 (DIR5) of Arabidopsis thaliana (Mouse-ear cress).